A 469-amino-acid polypeptide reads, in one-letter code: ATP synthase subunit beta (469 aa).

157-164 is an ATP binding site; the sequence is GGAGVGKT.

The protein belongs to the ATPase alpha/beta chains family. As to quaternary structure, F-type ATPases have 2 components, CF(1) - the catalytic core - and CF(0) - the membrane proton channel. CF(1) has five subunits: alpha(3), beta(3), gamma(1), delta(1), epsilon(1). CF(0) has three main subunits: a(1), b(2) and c(9-12). The alpha and beta chains form an alternating ring which encloses part of the gamma chain. CF(1) is attached to CF(0) by a central stalk formed by the gamma and epsilon chains, while a peripheral stalk is formed by the delta and b chains.

It is found in the cell membrane. The enzyme catalyses ATP + H2O + 4 H(+)(in) = ADP + phosphate + 5 H(+)(out). In terms of biological role, produces ATP from ADP in the presence of a proton gradient across the membrane. The catalytic sites are hosted primarily by the beta subunits. The chain is ATP synthase subunit beta from Brevibacillus brevis (strain 47 / JCM 6285 / NBRC 100599).